Consider the following 82-residue polypeptide: ATP synthase subunit c, chloroplastic (82 aa).

Transmembrane regions (helical) follow at residues 3–23 (PLIS…ASIG) and 57–77 (FAFM…LLFA).

Belongs to the ATPase C chain family. In terms of assembly, F-type ATPases have 2 components, F(1) - the catalytic core - and F(0) - the membrane proton channel. F(1) has five subunits: alpha(3), beta(3), gamma(1), delta(1), epsilon(1). F(0) has four main subunits: a(1), b(1), b'(1) and c(10-14). The alpha and beta chains form an alternating ring which encloses part of the gamma chain. F(1) is attached to F(0) by a central stalk formed by the gamma and epsilon chains, while a peripheral stalk is formed by the delta, b and b' chains.

The protein localises to the plastid. The protein resides in the chloroplast thylakoid membrane. Functionally, f(1)F(0) ATP synthase produces ATP from ADP in the presence of a proton or sodium gradient. F-type ATPases consist of two structural domains, F(1) containing the extramembraneous catalytic core and F(0) containing the membrane proton channel, linked together by a central stalk and a peripheral stalk. During catalysis, ATP synthesis in the catalytic domain of F(1) is coupled via a rotary mechanism of the central stalk subunits to proton translocation. In terms of biological role, key component of the F(0) channel; it plays a direct role in translocation across the membrane. A homomeric c-ring of between 10-14 subunits forms the central stalk rotor element with the F(1) delta and epsilon subunits. In Mesostigma viride (Green alga), this protein is ATP synthase subunit c, chloroplastic.